We begin with the raw amino-acid sequence, 337 residues long: Transcription factor HBI1 (337 aa).

The tract at residues valine 119–leucine 180 is disordered. Residues lysine 126 to methionine 151 show a composition bias toward basic and acidic residues. The span at lysine 152–aspartate 165 shows a compositional bias: polar residues. The bHLH domain maps to glutamine 191–leucine 241.

As to quaternary structure, homodimer. Interacts with IBH1. In terms of tissue distribution, highly expressed in hypocotyls and cotyledons. Expressed in leaves, stems, and flowers.

It is found in the nucleus. Its function is as follows. Atypical bHLH transcription factor that acts as a positive regulator of cell elongation downstream of multiple external and endogenous signals by direct binding to the promoters and activation of the two expansin genes EXPA1 and EXPA8, encoding cell wall loosening enzymes. Transcriptional activity is inhibited when binding to the bHLH transcription factor IBH1. In Arabidopsis thaliana (Mouse-ear cress), this protein is Transcription factor HBI1 (HBI1).